The primary structure comprises 135 residues: Holo-[acyl-carrier-protein] synthase (135 aa).

Mg(2+) is bound by residues aspartate 8 and glutamate 57.

Belongs to the P-Pant transferase superfamily. AcpS family. The cofactor is Mg(2+).

Its subcellular location is the cytoplasm. The enzyme catalyses apo-[ACP] + CoA = holo-[ACP] + adenosine 3',5'-bisphosphate + H(+). Its function is as follows. Transfers the 4'-phosphopantetheine moiety from coenzyme A to a Ser of acyl-carrier-protein. In Methylobacterium sp. (strain 4-46), this protein is Holo-[acyl-carrier-protein] synthase.